The sequence spans 244 residues: MKFIKAKGIVLKDVNFEESSKILTIFTSELGKIQALSKNCRRTLSPLGAVSQPLIYSEFVFTKTKEIYSISSASVIESFFDITQNVDLTIYSSYLIELVDSFIQIEQKNEDILRLLLNSLYMLKKGADPETVCRIFEIKMLIFTGFFPQFTQCVKCQKSNLSRIFFSFKNAGVVCAECKEENDMEISLEVVEKILIIAATDLKKLSKIRISKNLNNVLKTLMTTYIKLVLQKDVKILDFFKFIK.

Belongs to the RecO family.

In terms of biological role, involved in DNA repair and RecF pathway recombination. The sequence is that of DNA repair protein RecO from Caldicellulosiruptor saccharolyticus (strain ATCC 43494 / DSM 8903 / Tp8T 6331).